Here is a 222-residue protein sequence, read N- to C-terminus: Putative cobalt transport protein CbiM (222 aa).

The next 6 helical transmembrane spans lie at 8 to 28 (LPME…GYGI), 43 to 63 (PLLA…LPSV), 75 to 95 (LGAI…VLLF), 107 to 127 (TLGA…YLVF), 134 to 154 (LNIT…TYLT), and 178 to 198 (IFAI…ALLW).

This sequence belongs to the CbiM family. As to quaternary structure, forms an energy-coupling factor (ECF) transporter complex composed of an ATP-binding protein (A component, CbiO), a transmembrane protein (T component, CbiQ) and 2 possible substrate-capture proteins (S components, CbiM and CbiN) of unknown stoichimetry.

Its subcellular location is the cell membrane. The protein operates within cofactor biosynthesis; adenosylcobalamin biosynthesis. Functionally, part of the energy-coupling factor (ECF) transporter complex CbiMNOQ involved in cobalt import. The polypeptide is Putative cobalt transport protein CbiM (Methanococcus voltae (strain ATCC BAA-1334 / A3)).